The primary structure comprises 492 residues: MDPSKYRPSSAYDTPFLTTNAGGPVYNNVSSLTVGPRGPVLLEDYYLIEKLATFDREKIPERVVHARGASAKGFFEVTHDISHLTCADFLRAPGAQTPVICRFSTVVHERGSPESIRDIRGFAVKFYTREGNFDLVGNNVPVFFNRDAKSFPDTIRALKPNPKSHIQENWRILDFFSFLPESLHTFAFFYDDVCLPTDYRHMEGFGVHAYQLINKEGKAHYVKFHWKPTCGVKSMSEEEAIRVGGTNHSHATKDLYDSIAAGNYPEWKLFIQTMDPEDVDKFDFDPLDVTKTWPEDLLPLIPVGRLVLNRNIDNFFAENEQLAFNPGHIVPGIYYSEDKLLQTRIFAYADTQRHRIGPNYMQLPVNAPKCGHHNNHRDGAMNMTHRDEEVDYLPSRFDPCRPAEQYPIPACVLNGRRTNCVIPKENNFKQAGERYRSWESDRQDRYITKWVESLSDPRVTHEIRSIWISYLSQADKSCGQKVASRLTVKPTM.

Residues H65 and N138 contribute to the active site. Y348 is a binding site for heme.

Belongs to the catalase family. In terms of assembly, homotetramer. Requires heme as cofactor.

The protein resides in the peroxisome. It is found in the glyoxysome. It catalyses the reaction 2 H2O2 = O2 + 2 H2O. Occurs in almost all aerobically respiring organisms and serves to protect cells from the toxic effects of hydrogen peroxide. This is Catalase isozyme 2 (CAT2) from Solanum tuberosum (Potato).